The chain runs to 484 residues: uncharacterized protein (484 aa).

The region spanning 334-484 (IIIRQITDND…ENEWIYEVNL (151 aa)) is the N-acetyltransferase domain.

This is an uncharacterized protein from Methanocaldococcus jannaschii (strain ATCC 43067 / DSM 2661 / JAL-1 / JCM 10045 / NBRC 100440) (Methanococcus jannaschii).